A 71-amino-acid polypeptide reads, in one-letter code: Large ribosomal subunit protein uL30 (71 aa).

This sequence belongs to the universal ribosomal protein uL30 family. As to quaternary structure, part of the 50S ribosomal subunit.

This chain is Large ribosomal subunit protein uL30, found in Mycobacterium leprae (strain TN).